The following is a 413-amino-acid chain: Transforming growth factor beta-2 proprotein (413 aa).

The N-terminal stretch at 1 to 19 (MHYYVLFTFLTLDLAPVAL) is a signal peptide. 3 N-linked (GlcNAc...) asparagine glycosylation sites follow: Asn72, Asn140, and Asn241. 4 disulfides stabilise this stretch: Cys308-Cys317, Cys316-Cys379, Cys345-Cys410, and Cys349-Cys412.

Belongs to the TGF-beta family. In terms of assembly, interacts with Transforming growth factor beta-2 (TGF-beta-2) chain; interaction is non-covalent and maintains (TGF-beta-2) in a latent state. Homodimer; disulfide-linked. Interacts with TGF-beta receptors (tgfbr1 and tgfbr2), leading to signal transduction. Post-translationally, the precursor proprotein is cleaved in the Golgi apparatus to form Transforming growth factor beta-2 (TGF-beta-2) and Latency-associated peptide (LAP) chains, which remain non-covalently linked, rendering TGF-beta-2 inactive.

It is found in the secreted. The protein localises to the extracellular space. It localises to the extracellular matrix. Its function is as follows. Precursor of the Latency-associated peptide (LAP) and Transforming growth factor beta-2 (TGF-beta-2) chains, which constitute the regulatory and active subunit of TGF-beta-2, respectively. Required to maintain the Transforming growth factor beta-2 (TGF-beta-2) chain in a latent state during storage in extracellular matrix. Associates non-covalently with TGF-beta-2 and regulates its activation via interaction with 'milieu molecules', such as ltbp1 and lrrc32/garp, that control activation of TGF-beta-2. Functionally, multifunctional protein that regulates various processes such as angiogenesis and heart development. Activation into mature form follows different steps: following cleavage of the proprotein in the Golgi apparatus, Latency-associated peptide (LAP) and Transforming growth factor beta-2 (TGF-beta-2) chains remain non-covalently linked rendering TGF-beta-2 inactive during storage in extracellular matrix. At the same time, LAP chain interacts with 'milieu molecules', such as ltbp1 and lrrc32/garp, that control activation of TGF-beta-2 and maintain it in a latent state during storage in extracellular milieus. Once activated following release of LAP, TGF-beta-2 acts by binding to TGF-beta receptors (tgfbr1 and tgfbr2), which transduce signal. The sequence is that of Transforming growth factor beta-2 proprotein (tgfb2) from Xenopus laevis (African clawed frog).